We begin with the raw amino-acid sequence, 127 residues long: MNALGRHVIAELYGCGFDVLNDVKRVEEIMVRSALEAGAEIREVAFHKFSPQGVSGVVVISESHLAIHTWPELGYAAVDVFTCGDTVDPWDATNYLAKEFGAKYMTAKETKRGVMVEEFAESQAVNL.

Serine 63 (schiff-base intermediate with substrate; via pyruvic acid) is an active-site residue. Residue serine 63 is modified to Pyruvic acid (Ser); by autocatalysis. Histidine 68 (proton acceptor; for processing activity) is an active-site residue. Residue cysteine 83 is the Proton donor; for catalytic activity of the active site.

It belongs to the prokaryotic AdoMetDC family. Type 1 subfamily. As to quaternary structure, heterotetramer of two alpha and two beta chains arranged as a dimer of alpha/beta heterodimers. Pyruvate is required as a cofactor. In terms of processing, is synthesized initially as an inactive proenzyme. Formation of the active enzyme involves a self-maturation process in which the active site pyruvoyl group is generated from an internal serine residue via an autocatalytic post-translational modification. Two non-identical subunits are generated from the proenzyme in this reaction, and the pyruvate is formed at the N-terminus of the alpha chain, which is derived from the carboxyl end of the proenzyme. The post-translation cleavage follows an unusual pathway, termed non-hydrolytic serinolysis, in which the side chain hydroxyl group of the serine supplies its oxygen atom to form the C-terminus of the beta chain, while the remainder of the serine residue undergoes an oxidative deamination to produce ammonia and the pyruvoyl group blocking the N-terminus of the alpha chain.

It carries out the reaction S-adenosyl-L-methionine + H(+) = S-adenosyl 3-(methylsulfanyl)propylamine + CO2. The protein operates within amine and polyamine biosynthesis; S-adenosylmethioninamine biosynthesis; S-adenosylmethioninamine from S-adenosyl-L-methionine: step 1/1. Catalyzes the decarboxylation of S-adenosylmethionine to S-adenosylmethioninamine (dcAdoMet), the propylamine donor required for the synthesis of the polyamines spermine and spermidine from the diamine putrescine. This is S-adenosylmethionine decarboxylase proenzyme from Carboxydothermus hydrogenoformans (strain ATCC BAA-161 / DSM 6008 / Z-2901).